We begin with the raw amino-acid sequence, 323 residues long: Melanocortin receptor 3 (323 aa).

At 1 to 37 (MNSSCCLSSVSPMLPNLSEHPAAPPASNRSGSGFCEQ) the chain is on the extracellular side. Residues Asn-2, Asn-16, and Asn-28 are each glycosylated (N-linked (GlcNAc...) asparagine). Residues 38–63 (VFIKPEVFLALGIVSLMENILVILAV) form a helical membrane-spanning segment. The Cytoplasmic segment spans residues 64 to 75 (VRNGNLHSPMYF). Residues 76-100 (FLCSLAAADMLVSLSNSLETIMIAV) form a helical membrane-spanning segment. The Extracellular portion of the chain corresponds to 101 to 118 (INSDSLTLEDQFIQHMDN). The chain crosses the membrane as a helical span at residues 119 to 140 (IFDSMICISLVASICNLLAIAI). Residues 141 to 160 (DRYVTIFYALRYHSIMTVRK) are Cytoplasmic-facing. A helical transmembrane segment spans residues 161–181 (ALTLIGVIWVCCGICGVMFII). Topologically, residues 182-186 (YSESK) are extracellular. A helical membrane pass occupies residues 187–210 (MVIVCLITMFFAMVLLMGTLYIHM). Residues 211 to 245 (FLFARLHVQRIAVLPPAGVVAPQQHSCMKGAVTIT) lie on the Cytoplasmic side of the membrane. The helical transmembrane segment at 246-268 (ILLGVFIFCWAPFFLHLVLIITC) threads the bilayer. Topologically, residues 269–277 (PTNPYCICY) are extracellular. Residues 278-301 (TAHFNTYLVLIMCNSVIDPLIYAF) traverse the membrane as a helical segment. At 302–323 (RSLELRNTFKEILCGCNSMNLG) the chain is on the cytoplasmic side. Cys-315 is lipidated: S-palmitoyl cysteine.

The protein belongs to the G-protein coupled receptor 1 family. As to expression, brain.

Its subcellular location is the cell membrane. Its function is as follows. Receptor for MSH (alpha, beta and gamma) and ACTH. This receptor is mediated by G proteins which activate adenylate cyclase. Required for expression of anticipatory patterns of activity and wakefulness during periods of limited nutrient availability and for the normal regulation of circadian clock activity in the brain. The polypeptide is Melanocortin receptor 3 (Mc3r) (Mus musculus (Mouse)).